We begin with the raw amino-acid sequence, 1319 residues long: MGIRNFEKIRIKLASPEKILEWSHGEVTKPETINYRTLNPERDGLFCEIIFGPTKDWECSCGKYKRMRYKGLVCEKCGVEVTRAKVRRERMGHITLASPVSHIWYSKGSPNKMSLIIGISSKELESVLYFARYIVTSSQESTVEVGKILTEKEYKLLKQLYGNKFEAYMGADGILKLLTAIDLEKLRDELENELAEANSAQKRKKLVKRLKIVRDFIASGNRPEWMILTNVPVIPAELRPMVQLDGGRFATSDLNDLYRRVINRNNRLKKLLEIRAPEIVVKNEKRMLQEAVDALIDNGRRGKPVVAQNNRELKSLSDMLKGKQGRFRQNLLGKRVDYSARSVIVVGPSLKMNQCGIPKKMALELYKPFIMRELVRRELANNIKMAKKLVEESDDKVWAVIEDVIADHPVLLNRAPTLHRLSIQAFQPVLIEGKAIRLHPLVCSAFNADFDGDQMAVHLTLSPESMMEAKLLMFAPNNIISPSSGEPIAVPSQDMVMGCFYMTKERPGEKGEGKLFSNIEQVITAYQNDKVGTHALIKVRMNGELIETTPGRVLFNEILPEIDRNYHKTYGKKEIKSLIKSLYEAHGFTETAELINRVKNFGYHYGTFAGVSVGIEDLEVPPKKKSLLNQADKEVAQIDKDYKSGKIINEERYRKTIEVWSRTTEAVTDAMMKNLDEFNPVYMMATSGARGNVSQMRQLAGMRGNMADTQGRTIEVPIKANFREGLTVLEFFMSSHGARKGLADTALRTADSGYLTRRLVDISHEVIVNEEDCHTHEGIEVEALVGANGKIIEKLSERINGRVLAEDLVHKGKKIAKRNTMIHKDLLDKIEELGIKKVKIRSPLTCALEKGVCQKCYGMDLSNYNEILLGEAVGVVAAQSIGEPGTQLTMRTFHTGGVAGAATVVNSKKAENDGEVSFRDIKTIEINGEDVVVSQGGKIIIADNEHEVDSGSVIRVTEGQKVKEGDVLVTFDPYHIPIISSHDGKVQYRHFTPKNIRDEKYDVHEYLVVRSVDSVDSEPRVHILDKKNEKLATYNIPYGAYMMVRDGAKVKKGDIIAKIIKLGEGTKDITGGLPRVQELFEARNPKGKATLAEIDGRIEILTTKKKQMRVVNVRSLENPEEFKEYLIPMGERLVVTDGLKIKAGDKITEGAISPYDVLNIKGLVAAEQFILESVQQVYRDQGVTVNDKHIEIIVKQMFRKVRIIDSGASLFLEDEVIEKRVVDLENKKLEEQGKALIKYEPVIQGITKAAVNTGSFISAASFQETTKVLSNAAIEGKVDYLEGLKENVILGKKIPAGTGFNKYKSIKVRYNTDDKPEEE.

Residues C59, C61, C74, and C77 each contribute to the Zn(2+) site. Mg(2+) is bound by residues D449, D451, and D453. Residues C773, C846, C853, and C856 each contribute to the Zn(2+) site.

It belongs to the RNA polymerase beta' chain family. The RNAP catalytic core consists of 2 alpha, 1 beta, 1 beta' and 1 omega subunit. When a sigma factor is associated with the core the holoenzyme is formed, which can initiate transcription. Mg(2+) serves as cofactor. The cofactor is Zn(2+).

The catalysed reaction is RNA(n) + a ribonucleoside 5'-triphosphate = RNA(n+1) + diphosphate. Functionally, DNA-dependent RNA polymerase catalyzes the transcription of DNA into RNA using the four ribonucleoside triphosphates as substrates. This is DNA-directed RNA polymerase subunit beta' from Fusobacterium nucleatum subsp. nucleatum (strain ATCC 25586 / DSM 15643 / BCRC 10681 / CIP 101130 / JCM 8532 / KCTC 2640 / LMG 13131 / VPI 4355).